Here is a 278-residue protein sequence, read N- to C-terminus: Bifunctional protein FolD (278 aa).

Residues 163–165, Ser-188, and Val-229 contribute to the NADP(+) site; that span reads GRS.

It belongs to the tetrahydrofolate dehydrogenase/cyclohydrolase family. In terms of assembly, homodimer.

The enzyme catalyses (6R)-5,10-methylene-5,6,7,8-tetrahydrofolate + NADP(+) = (6R)-5,10-methenyltetrahydrofolate + NADPH. It catalyses the reaction (6R)-5,10-methenyltetrahydrofolate + H2O = (6R)-10-formyltetrahydrofolate + H(+). The protein operates within one-carbon metabolism; tetrahydrofolate interconversion. Catalyzes the oxidation of 5,10-methylenetetrahydrofolate to 5,10-methenyltetrahydrofolate and then the hydrolysis of 5,10-methenyltetrahydrofolate to 10-formyltetrahydrofolate. The chain is Bifunctional protein FolD from Exiguobacterium sp. (strain ATCC BAA-1283 / AT1b).